A 283-amino-acid polypeptide reads, in one-letter code: Shikimate dehydrogenase (NADP(+)) (283 aa).

Shikimate is bound by residues Ser-16–Ser-18 and Thr-63. The Proton acceptor role is filled by Lys-67. Residue Asp-79 participates in NADP(+) binding. Shikimate contacts are provided by Asn-88 and Asp-103. Residues Gly-128–Ala-132, Ala-223, and Gly-243 each bind NADP(+).

Belongs to the shikimate dehydrogenase family. Homodimer.

It catalyses the reaction shikimate + NADP(+) = 3-dehydroshikimate + NADPH + H(+). It participates in metabolic intermediate biosynthesis; chorismate biosynthesis; chorismate from D-erythrose 4-phosphate and phosphoenolpyruvate: step 4/7. Involved in the biosynthesis of the chorismate, which leads to the biosynthesis of aromatic amino acids. Catalyzes the reversible NADPH linked reduction of 3-dehydroshikimate (DHSA) to yield shikimate (SA). This Xanthomonas oryzae pv. oryzae (strain MAFF 311018) protein is Shikimate dehydrogenase (NADP(+)).